A 355-amino-acid polypeptide reads, in one-letter code: MSFSDNLVKILDKYENLGRKLSSGIIGDEFVKASKEYAELEDIVVKIKEYNKVKSELEEANNLRLEVALDNATLEMINNEIYILENLLPKLERAVRISLLPKDEADSKSAIIEVRAGSGGEEAALFAAVLFNMYQRYAEFKGWRFEILAISNTGIGGYKEASASIKGKDVFSKLKFESGVHRVQRVPETESQGRIHTSAATVAVLPEAEGVDIKIEDKDLRIDTYRSSGAGGQHVNTTDSAVRITHIPTGITVALQDEKSQHKNKAKALKILRARLYEEKRRQKEQERSDSRRWQVGSGDRSERIRTYNFLHGRVSDHRINLTLYKIDEVVKHGQLDEFIEALIANDEAKKLSEL.

An N5-methylglutamine modification is found at glutamine 233.

Belongs to the prokaryotic/mitochondrial release factor family. Post-translationally, methylated by PrmC. Methylation increases the termination efficiency of RF1.

The protein resides in the cytoplasm. Functionally, peptide chain release factor 1 directs the termination of translation in response to the peptide chain termination codons UAG and UAA. The protein is Peptide chain release factor 1 of Rickettsia typhi (strain ATCC VR-144 / Wilmington).